Consider the following 78-residue polypeptide: Vacuolar ATPase assembly integral membrane protein VMA21 (78 aa).

The Cytoplasmic segment spans residues 1–14 (MPADIPKSVVQKLV). A helical transmembrane segment spans residues 15-35 (FFTAAMIICPVATFFICQYLF). At 36–38 (SNN) the chain is on the lumenal side. A helical membrane pass occupies residues 39 to 59 (AIISGGVSALVANIVLIGYVV). Residues 60–78 (AAFMEDTTEQEPEETKKSR) lie on the Cytoplasmic side of the membrane. Residues 75 to 78 (KKSR) carry the Prevents secretion from ER motif.

It belongs to the VMA21 family.

It is found in the endoplasmic reticulum membrane. The protein resides in the endoplasmic reticulum-Golgi intermediate compartment membrane. The protein localises to the cytoplasmic vesicle. It localises to the COPII-coated vesicle membrane. Required for the assembly of the V0 complex of the vacuolar ATPase (V-ATPase) in the endoplasmic reticulum. This is Vacuolar ATPase assembly integral membrane protein VMA21 from Debaryomyces hansenii (strain ATCC 36239 / CBS 767 / BCRC 21394 / JCM 1990 / NBRC 0083 / IGC 2968) (Yeast).